The sequence spans 209 residues: Dual specificity phosphatase 29 (209 aa).

In terms of domain architecture, Tyrosine-protein phosphatase spans 44–193; sequence NHVNEVWPNL…LRELDIQLAL (150 aa). Residue 137 to 144 participates in substrate binding; that stretch reads NCAMGRSR. Residue C138 is the Phosphocysteine intermediate of the active site.

This sequence belongs to the protein-tyrosine phosphatase family. Non-receptor class dual specificity subfamily.

The protein resides in the cytoplasm. It is found in the nucleus. The enzyme catalyses O-phospho-L-tyrosyl-[protein] + H2O = L-tyrosyl-[protein] + phosphate. It carries out the reaction O-phospho-L-seryl-[protein] + H2O = L-seryl-[protein] + phosphate. The catalysed reaction is O-phospho-L-threonyl-[protein] + H2O = L-threonyl-[protein] + phosphate. Dual specificity phosphatase able to dephosphorylate phosphotyrosine, phosphoserine and phosphothreonine residues within the same substrate, with a preference for phosphotyrosine as a substrate. Involved in the modulation of AMPK and MAPK1/2 signaling pathways. The sequence is that of Dual specificity phosphatase 29 (dusp29) from Xenopus tropicalis (Western clawed frog).